The following is a 190-amino-acid chain: dCTP deaminase (190 aa).

113-118 serves as a coordination point for dCTP; the sequence is KSTYAR. Glu139 functions as the Proton donor/acceptor in the catalytic mechanism. DCTP is bound by residues Gln158, Tyr172, Lys181, and Gln182.

This sequence belongs to the dCTP deaminase family. Homotrimer.

The catalysed reaction is dCTP + H2O + H(+) = dUTP + NH4(+). The protein operates within pyrimidine metabolism; dUMP biosynthesis; dUMP from dCTP (dUTP route): step 1/2. Its function is as follows. Catalyzes the deamination of dCTP to dUTP. The sequence is that of dCTP deaminase from Chlamydia muridarum (strain MoPn / Nigg).